The chain runs to 362 residues: Fructose-bisphosphate aldolase (362 aa).

Residue aspartate 33 participates in dihydroxyacetone phosphate binding. The D-glyceraldehyde 3-phosphate site is built by serine 35 and threonine 38. Arginine 42 contributes to the beta-D-fructose 1,6-bisphosphate binding site. Residue lysine 106 participates in D-glyceraldehyde 3-phosphate binding. Dihydroxyacetone phosphate is bound at residue lysine 145. Glutamate 188 is a D-glyceraldehyde 3-phosphate binding site. Glutamate 188 acts as the Proton acceptor in catalysis. Lysine 230, serine 272, and glycine 273 together coordinate dihydroxyacetone phosphate. Lysine 230 functions as the Schiff-base intermediate with dihydroxyacetone phosphate in the catalytic mechanism. Residues 272 to 274 and serine 300 contribute to the beta-D-fructose 1,6-bisphosphate site; that span reads SGG. Dihydroxyacetone phosphate contacts are provided by glycine 302 and arginine 303. Residue arginine 303 participates in beta-D-fructose 1,6-bisphosphate binding.

This sequence belongs to the class I fructose-bisphosphate aldolase family. As to quaternary structure, homotetramer. Interacts with TRAP (via cytoplasmic domain); the interaction prevents substrate binding and thereby inhibits aldolase activity. Interacts with MTRAP (via cytoplasmic domain); MTRAP phosphorylation may increase the binding to FBPA. Interact with RH1 (via cytoplasmic domain). Interacts with RH2b (via cytoplasmic domain). Interacts with RH4 (via cytoplasmic domain). Interacts with AMA1 (via cytoplasmic domain); the interaction is weak, however it may be increased upon AMA1 phosphorylation. Interacts with EBA140 (via cytoplasmic domain); the interaction is weak. Interacts with EBA175 (via cytoplasmic domain); the interaction is weak. Interacts with EBA181 (via cytoplasmic domain); the interaction is weak. Interacts with G-actin and F-actin. May interact with ACT2/actin II; the interaction inhibits FBPA catalytic activity. Interacts with human SLC4A1/band 3 (via N-terminus); the interaction inhibits FBPA catalytic activity.

The protein localises to the cytoplasm. The protein resides in the membrane. It is found in the host cell membrane. The enzyme catalyses beta-D-fructose 1,6-bisphosphate = D-glyceraldehyde 3-phosphate + dihydroxyacetone phosphate. It functions in the pathway carbohydrate degradation; glycolysis; D-glyceraldehyde 3-phosphate and glycerone phosphate from D-glucose: step 4/4. The cytoplasmic tail of TRAP and probably other adhesins acts as a competitive inhibitor as the binding sites of the glycolytic substrate fructose 1,6-bisphosphate and TRAP partially overlap. Inhibited by suramin, an antiparasitic drug used to treat Trypanosome-mediated infection. Plays a key role in glycolysis by catalyzing the cleavage of fructose 1,6-bisphosphate into dihydroxyacetone phosphate and glyceraldehyde 3-phosphate. Independently of its catalytic activity, connects the actin filaments, and thus the actomyosin motor, to cell surface adhesins of the thrombospondin-related anonymous protein (TRAP), the erythrocyte binding ligand (EBL) and reticulocyte binding homolog (RH) protein families; this interaction is probably involved in transducing the motor force across the parasite surface required for sporozoite and ookinete gliding motility and merozoite invasion. Stimulates actin polymerisation. The protein is Fructose-bisphosphate aldolase of Plasmodium falciparum (isolate K1 / Thailand).